We begin with the raw amino-acid sequence, 440 residues long: Probable cytosolic iron-sulfur protein assembly protein 1 (440 aa).

WD repeat units follow at residues 12-51 (AHAEPAWTVSFNPTRSLLASCSTDRTIRLYSYIIPSSSDG), 71-110 (DHKRTVRSIAWSPDGRTLASGSFDSTVGVWEEVIPLSDDE), 148-187 (GHESECKSVGFSSDGALLASCSRDKSVWVWEVQPDADFEC), 193-233 (EHSQ…WCIF), 278-317 (EEDETVWCLAWSPDGRWLASGGDNGGIRLWQRTGSQPDSA), 326-379 (AHSR…SPSS), and 401-440 (HGVNDINSVAWCVREDKKGWGMLSSAGDDGSVKVWRVVRD). Acidic residues predominate over residues 107 to 116 (SDDEEEEDEG). The interval 107-137 (SDDEEEEDEGAQGVYKPAGVDSDGDGDGGKE) is disordered.

Belongs to the WD repeat CIA1 family.

Functionally, essential component of the cytosolic iron-sulfur (Fe/S) protein assembly machinery. Required for the maturation of extramitochondrial Fe/S proteins. This is Probable cytosolic iron-sulfur protein assembly protein 1 from Cryptococcus neoformans var. neoformans serotype D (strain B-3501A) (Filobasidiella neoformans).